A 144-amino-acid polypeptide reads, in one-letter code: 3-hydroxyacyl-[acyl-carrier-protein] dehydratase FabZ (144 aa).

Residue H48 is part of the active site.

This sequence belongs to the thioester dehydratase family. FabZ subfamily.

Its subcellular location is the cytoplasm. It carries out the reaction a (3R)-hydroxyacyl-[ACP] = a (2E)-enoyl-[ACP] + H2O. Functionally, involved in unsaturated fatty acids biosynthesis. Catalyzes the dehydration of short chain beta-hydroxyacyl-ACPs and long chain saturated and unsaturated beta-hydroxyacyl-ACPs. The polypeptide is 3-hydroxyacyl-[acyl-carrier-protein] dehydratase FabZ (Listeria welshimeri serovar 6b (strain ATCC 35897 / DSM 20650 / CCUG 15529 / CIP 8149 / NCTC 11857 / SLCC 5334 / V8)).